The sequence spans 220 residues: Deoxyribose-phosphate aldolase (220 aa).

Asp-89 (proton donor/acceptor) is an active-site residue. Lys-151 serves as the catalytic Schiff-base intermediate with acetaldehyde. Residue Lys-180 is the Proton donor/acceptor of the active site.

The protein belongs to the DeoC/FbaB aldolase family. DeoC type 1 subfamily.

It localises to the cytoplasm. It carries out the reaction 2-deoxy-D-ribose 5-phosphate = D-glyceraldehyde 3-phosphate + acetaldehyde. The protein operates within carbohydrate degradation; 2-deoxy-D-ribose 1-phosphate degradation; D-glyceraldehyde 3-phosphate and acetaldehyde from 2-deoxy-alpha-D-ribose 1-phosphate: step 2/2. Its function is as follows. Catalyzes a reversible aldol reaction between acetaldehyde and D-glyceraldehyde 3-phosphate to generate 2-deoxy-D-ribose 5-phosphate. In Staphylococcus epidermidis (strain ATCC 12228 / FDA PCI 1200), this protein is Deoxyribose-phosphate aldolase.